A 393-amino-acid chain; its full sequence is Squamosa promoter-binding-like protein 17 (393 aa).

Residues 40 to 49 show a composition bias toward low complexity; sequence AAAVESSSTS. A disordered region spans residues 40-67; that stretch reads AAAVESSSTSSGGGGKKGKGVAAAAAPP. The SBP-type zinc-finger motif lies at 71–148; the sequence is PPRCQVEGCG…AGHNERRRKP (78 aa). Zn(2+) is bound by residues C74, C79, C96, H99, C115, C118, H122, and C134. The Bipartite nuclear localization signal signature appears at 131–147; it reads KKSCRRRLAGHNERRRK. A compositionally biased stretch (basic residues) spans 137–148; the sequence is RLAGHNERRRKP. Disordered stretches follow at residues 137-158, 273-301, and 317-393; these read RLAGHNERRRKPTPGPLSSRYG, WDTTQSTSSHNRSPPMSSTASAFGGGNNP, and GWNS…NWSL. 2 stretches are compositionally biased toward polar residues: residues 273–293 and 380–393; these read WDTTQSTSSHNRSPPMSSTAS and GAFSHSTNAMNWSL.

As to expression, expressed in young panicles.

It localises to the nucleus. Its function is as follows. Trans-acting factor that binds specifically to the consensus nucleotide sequence 5'-TNCGTACAA-3'. May be involved in panicle development. In Oryza sativa subsp. japonica (Rice), this protein is Squamosa promoter-binding-like protein 17 (SPL17).